A 97-amino-acid chain; its full sequence is Apolipoprotein C-II (97 aa).

An N-terminal signal peptide occupies residues 1–22; that stretch reads MGSRFFLALFLVILMLGNEVQG. Residues 63-71 form a lipid binding region; the sequence is SMDEKLRDM. Residues 75-97 are lipoprotein lipase cofactor; the sequence is SSAAMSTYAGIFTDQLLTLLRGE.

The protein belongs to the apolipoprotein C2 family. As to expression, adult and fetal liver, intestine and peritoneal macrophages.

It is found in the secreted. Its function is as follows. Component of chylomicrons, very low-density lipoproteins (VLDL), low-density lipoproteins (LDL), and high-density lipoproteins (HDL) in plasma. Plays an important role in lipoprotein metabolism as an activator of lipoprotein lipase. This is Apolipoprotein C-II (Apoc2) from Mus musculus (Mouse).